We begin with the raw amino-acid sequence, 232 residues long: 2-C-methyl-D-erythritol 4-phosphate cytidylyltransferase (232 aa).

It belongs to the IspD/TarI cytidylyltransferase family. IspD subfamily.

The catalysed reaction is 2-C-methyl-D-erythritol 4-phosphate + CTP + H(+) = 4-CDP-2-C-methyl-D-erythritol + diphosphate. It functions in the pathway isoprenoid biosynthesis; isopentenyl diphosphate biosynthesis via DXP pathway; isopentenyl diphosphate from 1-deoxy-D-xylulose 5-phosphate: step 2/6. Functionally, catalyzes the formation of 4-diphosphocytidyl-2-C-methyl-D-erythritol from CTP and 2-C-methyl-D-erythritol 4-phosphate (MEP). The polypeptide is 2-C-methyl-D-erythritol 4-phosphate cytidylyltransferase (Synechococcus sp. (strain ATCC 27144 / PCC 6301 / SAUG 1402/1) (Anacystis nidulans)).